A 335-amino-acid polypeptide reads, in one-letter code: Phosphate acyltransferase (335 aa).

Belongs to the PlsX family. As to quaternary structure, homodimer. Probably interacts with PlsY.

It localises to the cytoplasm. The enzyme catalyses a fatty acyl-[ACP] + phosphate = an acyl phosphate + holo-[ACP]. It participates in lipid metabolism; phospholipid metabolism. Functionally, catalyzes the reversible formation of acyl-phosphate (acyl-PO(4)) from acyl-[acyl-carrier-protein] (acyl-ACP). This enzyme utilizes acyl-ACP as fatty acyl donor, but not acyl-CoA. In Streptococcus pyogenes serotype M18 (strain MGAS8232), this protein is Phosphate acyltransferase.